Consider the following 186-residue polypeptide: PQPQPQYSQPQQPISQQQQQQQQQQQQQQQEQQILQQILQQQLIPCMDVVLQQHNIAHGRSQVLQQSTYQLLQELCCQHLWQIPEQSQCQAIHNVVHAIILHQQQQKQQQQPSSQFSFQQPLQQYPLGQGSFRPSQQNPQAQGSVQPQQLPQFEIRNLALQTLPAMCNVYIPPYCTIAPFGIFGTN.

A disordered region spans residues 1–20 (PQPQPQYSQPQQPISQQQQQ).

This sequence belongs to the gliadin/glutenin family. Post-translationally, substrate of transglutaminase.

Its function is as follows. Gliadin is the major seed storage protein in wheat. This Triticum aestivum (Wheat) protein is Alpha/beta-gliadin clone PTO-A10.